A 617-amino-acid chain; its full sequence is Putative metal ion transporter C17A12.14 (617 aa).

A disordered region spans residues 1–141 (MPSNTSRSVP…GKNTRDQPSP (141 aa)). A Phosphoserine modification is found at S105. Positions 117–136 (SHPEDIQRKEFETENGKNTR) are enriched in basic and acidic residues. Phosphoserine is present on residues S152, S162, S226, and S241. Helical transmembrane passes span 560 to 580 (TILGTILIPLNLVTGLWGMNV) and 590 to 610 (LGWFFSILGSLMIFAISSFIL).

Belongs to the CorA metal ion transporter (MIT) (TC 1.A.35) family. As to quaternary structure, interacts with sad1.

It is found in the membrane. This is Putative metal ion transporter C17A12.14 from Schizosaccharomyces pombe (strain 972 / ATCC 24843) (Fission yeast).